We begin with the raw amino-acid sequence, 623 residues long: Flap endonuclease 1 (623 aa).

The tract at residues 1 to 106 (MGIKGLTKFI…SELEKRGEKR (106 aa)) is N-domain. Asp34 lines the Mg(2+) pocket. DNA-binding residues include Arg47 and Arg72. Residues Asp88, Glu160, Glu162, Asp181, and Asp183 each contribute to the Mg(2+) site. The tract at residues 124 to 267 (EIKKQSGRTV…KTAYNLIKEY (144 aa)) is I-domain. Glu160 lines the DNA pocket. DNA contacts are provided by Gly245 and Asp247. Asp247 is a Mg(2+) binding site. Residues 350–358 (TQRRLDNFF) are interaction with PCNA. The interval 368-517 (LVIEESQSQS…LSSNSTLHSC (150 aa)) is disordered. Composition is skewed to basic and acidic residues over residues 410-424 (TKVEKEPKREKKDEE) and 466-482 (QKSDSESGNVKKEKTEQ). The span at 502-517 (AGSNTHLSSNSTLHSC) shows a compositional bias: polar residues.

It belongs to the XPG/RAD2 endonuclease family. FEN1 subfamily. Interacts with PCNA. Three molecules of FEN1 bind to one PCNA trimer with each molecule binding to one PCNA monomer. PCNA stimulates the nuclease activity without altering cleavage specificity. Mg(2+) is required as a cofactor. Post-translationally, phosphorylated. Phosphorylation upon DNA damage induces relocalization to the nuclear plasma.

It is found in the nucleus. The protein resides in the nucleolus. It localises to the nucleoplasm. The protein localises to the mitochondrion. Functionally, structure-specific nuclease with 5'-flap endonuclease and 5'-3' exonuclease activities involved in DNA replication and repair. During DNA replication, cleaves the 5'-overhanging flap structure that is generated by displacement synthesis when DNA polymerase encounters the 5'-end of a downstream Okazaki fragment. It enters the flap from the 5'-end and then tracks to cleave the flap base, leaving a nick for ligation. Also involved in the long patch base excision repair (LP-BER) pathway, by cleaving within the apurinic/apyrimidinic (AP) site-terminated flap. Acts as a genome stabilization factor that prevents flaps from equilibrating into structures that lead to duplications and deletions. Also possesses 5'-3' exonuclease activity on nicked or gapped double-stranded DNA, and exhibits RNase H activity. Also involved in replication and repair of rDNA and in repairing mitochondrial DNA. The chain is Flap endonuclease 1 from Plasmodium vivax (strain Salvador I).